Reading from the N-terminus, the 1183-residue chain is DNA-directed RNA polymerase subunit beta' (1183 aa).

Zn(2+) is bound by residues C60, C62, C75, and C78. D449, D451, and D453 together coordinate Mg(2+). The Zn(2+) site is built by C794, C867, C874, and C877.

It belongs to the RNA polymerase beta' chain family. The RNAP catalytic core consists of 2 alpha, 1 beta, 1 beta' and 1 omega subunit. When a sigma factor is associated with the core the holoenzyme is formed, which can initiate transcription. Mg(2+) is required as a cofactor. Zn(2+) serves as cofactor.

The catalysed reaction is RNA(n) + a ribonucleoside 5'-triphosphate = RNA(n+1) + diphosphate. DNA-dependent RNA polymerase catalyzes the transcription of DNA into RNA using the four ribonucleoside triphosphates as substrates. This chain is DNA-directed RNA polymerase subunit beta', found in Caldanaerobacter subterraneus subsp. tengcongensis (strain DSM 15242 / JCM 11007 / NBRC 100824 / MB4) (Thermoanaerobacter tengcongensis).